A 372-amino-acid chain; its full sequence is Ca(2+)/H(+) antiporter (372 aa).

Transmembrane regions (helical) follow at residues isoleucine 7–glycine 27, threonine 29–alanine 49, glycine 62–leucine 82, leucine 94–glycine 114, methionine 134–valine 154, leucine 162–methionine 182, leucine 222–valine 242, serine 251–alanine 271, glycine 294–isoleucine 314, leucine 320–isoleucine 340, and isoleucine 352–valine 372.

Belongs to the Ca(2+):cation antiporter (CaCA) (TC 2.A.19) family. Cation/proton exchanger (CAX) subfamily.

The protein resides in the cell inner membrane. In terms of biological role, ca(+)/H(+) antiporter that extrudes calcium in exchange for external protons. Plays an important role in salt tolerance. Does not transport sodium or lithium. This Synechocystis sp. (strain ATCC 27184 / PCC 6803 / Kazusa) protein is Ca(2+)/H(+) antiporter.